The chain runs to 131 residues: Small ribosomal subunit protein eS8 (131 aa).

The interval 15 to 36 (PSGGKKGRVRKTKKKALGGGPP) is disordered. Basic residues predominate over residues 17–30 (GGKKGRVRKTKKKA).

It belongs to the eukaryotic ribosomal protein eS8 family. In terms of assembly, part of the 30S ribosomal subunit.

In Pyrobaculum calidifontis (strain DSM 21063 / JCM 11548 / VA1), this protein is Small ribosomal subunit protein eS8.